Here is a 353-residue protein sequence, read N- to C-terminus: Photosystem II protein D1 (353 aa).

An N-acetylthreonine modification is found at threonine 2. Threonine 2 bears the Phosphothreonine mark. The next 3 membrane-spanning stretches (helical) occupy residues 29–46 (YIGW…TATS), 118–133 (HFFL…EWEL), and 142–156 (WIAV…AATA). A chlorophyll a-binding site is contributed by histidine 118. Tyrosine 126 serves as a coordination point for pheophytin a. Residues aspartate 170 and glutamate 189 each contribute to the [CaMn4O5] cluster site. The chain crosses the membrane as a helical span at residues 197–218 (FHMLGVAGVFGGSLFSAMHGSL). Position 198 (histidine 198) interacts with chlorophyll a. A quinone-binding positions include histidine 215 and 264–265 (SF). Histidine 215 contributes to the Fe cation binding site. Histidine 272 is a binding site for Fe cation. The chain crosses the membrane as a helical span at residues 274–288 (FLAAWPVVGIWFTAL). [CaMn4O5] cluster-binding residues include histidine 332, glutamate 333, aspartate 342, and alanine 344. Residues 345 to 353 (VVEAPAVNG) constitute a propeptide that is removed on maturation.

It belongs to the reaction center PufL/M/PsbA/D family. PSII is composed of 1 copy each of membrane proteins PsbA, PsbB, PsbC, PsbD, PsbE, PsbF, PsbH, PsbI, PsbJ, PsbK, PsbL, PsbM, PsbT, PsbX, PsbY, PsbZ, Psb30/Ycf12, at least 3 peripheral proteins of the oxygen-evolving complex and a large number of cofactors. It forms dimeric complexes. Requires The D1/D2 heterodimer binds P680, chlorophylls that are the primary electron donor of PSII, and subsequent electron acceptors. It shares a non-heme iron and each subunit binds pheophytin, quinone, additional chlorophylls, carotenoids and lipids. D1 provides most of the ligands for the Mn4-Ca-O5 cluster of the oxygen-evolving complex (OEC). There is also a Cl(-1) ion associated with D1 and D2, which is required for oxygen evolution. The PSII complex binds additional chlorophylls, carotenoids and specific lipids. as cofactor. In terms of processing, tyr-161 forms a radical intermediate that is referred to as redox-active TyrZ, YZ or Y-Z. Post-translationally, C-terminally processed by CTPA; processing is essential to allow assembly of the oxygen-evolving complex and thus photosynthetic growth.

It localises to the plastid. It is found in the chloroplast thylakoid membrane. It catalyses the reaction 2 a plastoquinone + 4 hnu + 2 H2O = 2 a plastoquinol + O2. Photosystem II (PSII) is a light-driven water:plastoquinone oxidoreductase that uses light energy to abstract electrons from H(2)O, generating O(2) and a proton gradient subsequently used for ATP formation. It consists of a core antenna complex that captures photons, and an electron transfer chain that converts photonic excitation into a charge separation. The D1/D2 (PsbA/PsbD) reaction center heterodimer binds P680, the primary electron donor of PSII as well as several subsequent electron acceptors. The protein is Photosystem II protein D1 of Chlorella vulgaris (Green alga).